A 203-amino-acid chain; its full sequence is Glycerol-3-phosphate acyltransferase (203 aa).

5 helical membrane passes run 13-33 (TLAC…LILT), 66-86 (TLLL…LWGV), 88-108 (AGMA…WLSF), 118-138 (IGVL…AWLA), and 156-176 (IIPV…FAVM).

The protein belongs to the PlsY family. Probably interacts with PlsX.

The protein localises to the cell inner membrane. The enzyme catalyses an acyl phosphate + sn-glycerol 3-phosphate = a 1-acyl-sn-glycero-3-phosphate + phosphate. Its pathway is lipid metabolism; phospholipid metabolism. Catalyzes the transfer of an acyl group from acyl-phosphate (acyl-PO(4)) to glycerol-3-phosphate (G3P) to form lysophosphatidic acid (LPA). This enzyme utilizes acyl-phosphate as fatty acyl donor, but not acyl-CoA or acyl-ACP. The sequence is that of Glycerol-3-phosphate acyltransferase from Sinorhizobium medicae (strain WSM419) (Ensifer medicae).